The sequence spans 121 residues: Darcynin homolog (121 aa).

This sequence belongs to the darcynin family.

The chain is Darcynin homolog from Streptomyces avermitilis (strain ATCC 31267 / DSM 46492 / JCM 5070 / NBRC 14893 / NCIMB 12804 / NRRL 8165 / MA-4680).